The sequence spans 93 residues: Small ribosomal subunit protein uS19 (93 aa).

Belongs to the universal ribosomal protein uS19 family.

Its function is as follows. Protein S19 forms a complex with S13 that binds strongly to the 16S ribosomal RNA. This is Small ribosomal subunit protein uS19 from Campylobacter lari (strain RM2100 / D67 / ATCC BAA-1060).